The primary structure comprises 573 residues: ESX-1 secretion system protein EccA1 (573 aa).

334–341 contacts ATP; sequence GPPGTGKT.

This sequence belongs to the CbxX/CfxQ family. In terms of assembly, part of the ESX-1 / type VII secretion system (T7SS), which is composed of cytosolic and membrane components.

It localises to the cytoplasm. Part of the ESX-1 / type VII specialized secretion system (T7SS), which exports several proteins including EsxA and EsxB. EccA1 exhibits ATPase activity and may provide energy for the export of ESX-1 substrates. The sequence is that of ESX-1 secretion system protein EccA1 from Mycobacterium leprae (strain TN).